The sequence spans 435 residues: Transforming growth factor beta-2 proprotein (435 aa).

The N-terminal stretch at 1 to 20 is a signal peptide; it reads MHYCVLSAFLLLHLVTVALS. 3 N-linked (GlcNAc...) asparagine glycosylation sites follow: N72, N140, and N241. 4 cysteine pairs are disulfide-bonded: C309-C318, C317-C380, C346-C411, and C350-C413.

This sequence belongs to the TGF-beta family. In terms of assembly, interacts with the serine proteases, HTRA1 and HTRA3. Interacts with ASPN. Interacts with MFAP5. Interacts with Transforming growth factor beta-2 (TGF-beta-2) chain; interaction is non-covalent and maintains (TGF-beta-2) in a latent state. Interacts with LRRC32/GARP; leading to regulate activation of TGF-beta-2. Interacts with NREP; the interaction results in a decrease in TGFB2 autoinduction. As to quaternary structure, transforming growth factor beta-2: Homodimer; disulfide-linked. Transforming growth factor beta-2: Interacts with TGF-beta receptors (TGFBR1 and TGFBR2), leading to signal transduction. Post-translationally, the precursor proprotein is cleaved in the Golgi apparatus to form Transforming growth factor beta-2 (TGF-beta-2) and Latency-associated peptide (LAP) chains, which remain non-covalently linked, rendering TGF-beta-2 inactive.

It is found in the secreted. It localises to the extracellular space. Its subcellular location is the extracellular matrix. Functionally, precursor of the Latency-associated peptide (LAP) and Transforming growth factor beta-2 (TGF-beta-2) chains, which constitute the regulatory and active subunit of TGF-beta-2, respectively. In terms of biological role, required to maintain the Transforming growth factor beta-2 (TGF-beta-2) chain in a latent state during storage in extracellular matrix. Associates non-covalently with TGF-beta-2 and regulates its activation via interaction with 'milieu molecules', such as LTBP1 and LRRC32/GARP, that control activation of TGF-beta-2. Its function is as follows. Multifunctional protein that regulates various processes such as angiogenesis and heart development. Activation into mature form follows different steps: following cleavage of the proprotein in the Golgi apparatus, Latency-associated peptide (LAP) and Transforming growth factor beta-2 (TGF-beta-2) chains remain non-covalently linked rendering TGF-beta-2 inactive during storage in extracellular matrix. At the same time, LAP chain interacts with 'milieu molecules', such as LTBP1 and LRRC32/GARP, that control activation of TGF-beta-2 and maintain it in a latent state during storage in extracellular milieus. Once activated following release of LAP, TGF-beta-2 acts by binding to TGF-beta receptors (TGFBR1 and TGFBR2), which transduce signal. In Sus scrofa (Pig), this protein is Transforming growth factor beta-2 proprotein (TGFB2).